A 317-amino-acid polypeptide reads, in one-letter code: Metaxin-1 (317 aa).

Residues lysine 38, lysine 41, and lysine 78 each participate in a glycyl lysine isopeptide (Lys-Gly) (interchain with G-Cter in ubiquitin) cross-link. A helical membrane pass occupies residues glutamate 164 to arginine 184.

Belongs to the metaxin family. In terms of assembly, interacts with MTX2/metaxin-2. Associates with the mitochondrial contact site and cristae organizing system (MICOS) complex, composed of at least MICOS10/MIC10, CHCHD3/MIC19, CHCHD6/MIC25, APOOL/MIC27, IMMT/MIC60, APOO/MIC23/MIC26 and QIL1/MIC13. This complex was also known under the names MINOS or MitOS complex. The MICOS complex associates with mitochondrial outer membrane proteins SAMM50, MTX1 and MTX2 (together described as components of the mitochondrial outer membrane sorting assembly machinery (SAM) complex) and DNAJC11, mitochondrial inner membrane protein TMEM11 and with HSPA9. The MICOS and SAM complexes together with DNAJC11 are part of a large protein complex spanning both membranes termed the mitochondrial intermembrane space bridging (MIB) complex. Interacts with ARMC1. Post-translationally, ubiquitinated by PRKN during mitophagy, leading to its degradation and enhancement of mitophagy. Deubiquitinated by USP30.

Its subcellular location is the mitochondrion outer membrane. Functionally, involved in transport of proteins into the mitochondrion. Essential for embryonic development. The sequence is that of Metaxin-1 (MTX1) from Sus scrofa (Pig).